Here is a 183-residue protein sequence, read N- to C-terminus: Photosystem I assembly protein Ycf4 (183 aa).

Transmembrane regions (helical) follow at residues 21–43 (YIWG…SSYL) and 63–85 (LVMC…LILW).

This sequence belongs to the Ycf4 family.

It localises to the plastid. It is found in the chloroplast thylakoid membrane. Functionally, seems to be required for the assembly of the photosystem I complex. The protein is Photosystem I assembly protein Ycf4 of Chlorella vulgaris (Green alga).